The sequence spans 254 residues: Alcohol dehydrogenase 2 (254 aa).

Phe10–Leu33 serves as a coordination point for NAD(+). A substrate-binding site is contributed by Ser138. The active-site Proton acceptor is the Tyr151.

Belongs to the short-chain dehydrogenases/reductases (SDR) family. As to quaternary structure, homodimer.

The catalysed reaction is a primary alcohol + NAD(+) = an aldehyde + NADH + H(+). It carries out the reaction a secondary alcohol + NAD(+) = a ketone + NADH + H(+). The sequence is that of Alcohol dehydrogenase 2 (Adh2) from Drosophila mulleri (Fruit fly).